Here is a 567-residue protein sequence, read N- to C-terminus: Microtubule-associated protein 70-1 (567 aa).

The stretch at 38–341 (VRVELTRLEN…AARSEAQLKD (304 aa)) forms a coiled coil. The tract at residues 220–440 (ILDRMHRQKV…SGMNVSTDSS (221 aa)) is required for targeting to microtubules. Disordered stretches follow at residues 425 to 457 (KGHVNGSGMNVSTDSSEDKESNNSDEKANEFTS) and 534 to 567 (LEKEQDNKAKRFGSSSSQLPPGRTLPRSGSARNM). A compositionally biased stretch (basic and acidic residues) spans 440-453 (SEDKESNNSDEKAN). Positions 516–545 (KKRRMEVAAMEKEMAALRLEKEQDNKAKRF) form a coiled coil.

The protein belongs to the MAP70 family.

It localises to the cytoplasm. Its subcellular location is the cytoskeleton. Its function is as follows. Plant-specific protein that interact with microtubules. This is Microtubule-associated protein 70-1 (MAP70.1) from Oryza sativa subsp. japonica (Rice).